Consider the following 4059-residue polypeptide: Fibrocystin (4059 aa).

The first 18 residues, 1-18 (MMLAWLVSLLSMEVLLLA), serve as a signal peptide directing secretion. Over 19 to 3851 (KPYSSFQFEP…LPVASKERST (3833 aa)) the chain is Extracellular. The region spanning 25 to 109 (QFEPAEGSLA…AGPYSLEMRS (85 aa)) is the IPT/TIG 1; atypical domain. N-linked (GlcNAc...) asparagine glycosylation is found at Asn-55 and Asn-224. 2 IPT/TIG domains span residues 135–230 (PVLY…FSVF) and 257–333 (PEIL…FEVG). Residues 323-483 (AGNRGLRFEV…TWLNPDVVNT (161 aa)) form the PA14 domain. Asn-355, Asn-385, Asn-518, Asn-527, Asn-620, Asn-639, Asn-709, Asn-867, Asn-965, Asn-975, Asn-1082, Asn-1114, Asn-1133, Asn-1239, Asn-1273, Asn-1308, Asn-1319, Asn-1344, Asn-1373, Asn-1456, Asn-1471, Asn-1528, Asn-1613, Asn-1627, Asn-1694, Asn-1760, Asn-1775, Asn-1875, Asn-1879, Asn-1915, Asn-1955, Asn-2030, and Asn-2139 each carry an N-linked (GlcNAc...) asparagine glycan. IPT/TIG domains are found at residues 945-997 (LVHF…FMLV) and 1017-1100 (PRLD…AFTY). The IPT/TIG 6; atypical domain maps to 1106–1190 (PVIVSLSRNR…IRSQGVDLYI (85 aa)). The 69-residue stretch at 1198–1266 (SVEPCSGSLL…RADVLTVLAS (69 aa)) folds into the IPT/TIG 7 domain. Positions 1297–1378 (PVVTAMWGEF…MGFANMSVVP (82 aa)) constitute an IPT/TIG 8; atypical domain. Residues 1385–1466 (PQIIAIFPTH…ITVLVNGLTS (82 aa)) form the IPT/TIG 9 domain. IPT/TIG domains are found at residues 1482-1566 (PIVD…RNFF) and 1569-1637 (PQVL…IDVN). One can recognise an IPT/TIG 12; atypical domain in the interval 1654 to 1738 (PELLSVSRSQ…VLRATVTSVT (85 aa)). Residues 1928 to 2049 (HSWFPQRVPH…PEVTVTYLQA (122 aa)) enclose the G8 1 domain. PbH1 repeat units follow at residues 2244 to 2266 (TWGLKVDSNVFYKIVGHALLLGS) and 2287 to 2321 (EQGSTIRNNVIISVSAAEGLSGSEMLAPAGIYTFS). N-linked (GlcNAc...) asparagine glycosylation is present at Asn-2380. 2 PbH1 repeats span residues 2404–2426 (SNNLHLKNFQVYACRDFGIDILE) and 2459–2481 (RWELTISNTTFVNFDGNCVAIRT). Asn-2466, Asn-2503, Asn-2529, Asn-2547, Asn-2581, Asn-2589, Asn-2627, Asn-2747, and Asn-2762 each carry an N-linked (GlcNAc...) asparagine glycan. Positions 2741 to 2867 (KGWGGYNHTI…PKKSWVHLGA (127 aa)) constitute a G8 2 domain. 2 PbH1 repeats span residues 3004 to 3026 (SAGSWVISSTVHQSCSVGIHASS) and 3027 to 3049 (SHGVILTDNVVFGTNGHGIDVEG). An N-linked (GlcNAc...) asparagine glycan is attached at Asn-3051. A PbH1 7 repeat occupies 3080–3102 (AEDIILHGNVVAGSERLGFHVGG). Residues Asn-3133 and Asn-3162 are each glycosylated (N-linked (GlcNAc...) asparagine). One copy of the PbH1 8 repeat lies at 3188–3212 (TVQITLRNSVIVATSSSFDCIHDRK). Residues Asn-3218, Asn-3719, and Asn-3831 are each glycosylated (N-linked (GlcNAc...) asparagine). The helical transmembrane segment at 3852–3872 (IILALSLCSVASWVALSCLVC) threads the bilayer. The segment at 3869 to 3886 (CLVCCWFKKSKTRKIKPE) is ciliary targeting sequence (CST). The Cytoplasmic segment spans residues 3873-4059 (CWFKKSKTRK…LHTAPPETIQ (187 aa)). Over residues 3885-3898 (PEDISESQAKEQKK) the composition is skewed to basic and acidic residues. The interval 3885–3915 (PEDISESQAKEQKKNTHNSSKPRGLQAKTAK) is disordered. A nuclear localization signal (NLS) region spans residues 3946 to 3970 (KRKVSRLAVTEERTTTPAPKIPRIT). Positions 4015–4038 (QERKQGQEPSQLDKGSDCTGLSQE) are disordered.

Interacts with CAMLG. Interacts with PKD2. Interacts (via CST) with ARF4; this interaction allows an efficient PKHD1 trafficking to the cilium. Interacts (via CST) with RAB8A; this interaction controls trafficking through the endomembrane systeme and to the cilium. Interacts (via CST) with TULP3; this interaction allows PKHD1 trafficking to the cilium. Post-translationally, palmitoylated. Palmitoylation facilitates the trafficking to the cilia and membrane targeting. N-glycosylated. In terms of processing, several proteolytic cleavages occur within the extracellular domain, whereas at least one cleavage occurs within the cytoplasmic domain. Cleaved by a probable proprotein convertase which produces an extracellular domain (polyductin extracellular domain, (PECD)) and a C-terminal fragment (polyductin transmembrane fragment (PTM)) which are tethered together by disulfide bonds. This extracellular domain (PECD) is then shed from the primary cilium by activation of a member of the ADAM metalloproteinase disintegrins family, resulting in concomitant release of an intra-cellular C-terminal fragment (ICD) via a gamma-secretase-dependent process. The proteolytic cleavage of the C-terminal intracellular fragment (ICD) is controlled by cytosolic calcium concentration and activation of PKC. As to expression, expressed in bile ducts and distal nephron segments but is absent from the proximal tubule. Expressed in pancreas and kidney but also in the liver. Expressed primarily in the distal tubule and thick ascending limb of the loop of Henle, and at low-level in the proximal tubule before renal development is complete at P0.

It localises to the cell membrane. It is found in the cytoplasm. The protein localises to the apical cell membrane. Its subcellular location is the cytoskeleton. The protein resides in the cilium basal body. It localises to the cell projection. It is found in the cilium. The protein localises to the spindle. Its subcellular location is the chromosome. The protein resides in the centromere. It localises to the nucleus. It is found in the secreted. The protein localises to the extracellular exosome. Its subcellular location is the endoplasmic reticulum. The protein resides in the golgi apparatus. In terms of biological role, promotes ciliogenesis in renal epithelial cells and therefore participates in the tubules formation and/or ensures the maintenance of the architecture of the lumen of the kidney. Has an impact on cellular symmetry by ensuring correct bipolar cell division through the regulation of centrosome duplication and mitotic spindle assembly and by maintaining oriented cell division (OCD) during tubular elongation through planar cell polarity (PCP) pathway. During epithelial cell morphogenesis, it also regulates cell-cell and cell-matrix adhesion and participates in cell motility. Promotes cell-cell contact through the positive regulation of PTK2 kinase activity leading to either positive regulation of epithelial cell proliferation through the HRAS/RAF1 pathways, or negative regulation of apoptosis through the PDK1/AKT1 pathway. May act in collecting-duct and biliary differentiation. May participate in the regulation of the cholangiocytes proliferation and the CCN2 production in an CXCL8-dependent manner. The polypeptide is Fibrocystin (Mus musculus (Mouse)).